Consider the following 1464-residue polypeptide: DNA polymerase III PolC-type (1464 aa).

Positions 426 to 582 constitute an Exonuclease domain; it reads YVVFDVETTG…YDAEATGRLL (157 aa).

This sequence belongs to the DNA polymerase type-C family. PolC subfamily.

The protein localises to the cytoplasm. The enzyme catalyses DNA(n) + a 2'-deoxyribonucleoside 5'-triphosphate = DNA(n+1) + diphosphate. Required for replicative DNA synthesis. This DNA polymerase also exhibits 3' to 5' exonuclease activity. This is DNA polymerase III PolC-type from Streptococcus thermophilus (strain ATCC BAA-250 / LMG 18311).